The following is a 49-amino-acid chain: MREKITLECTECKQRNYKSFKNKQNDRDRIELKKYCKFCNRHTLHKESK.

This sequence belongs to the bacterial ribosomal protein bL33 family.

This Natranaerobius thermophilus (strain ATCC BAA-1301 / DSM 18059 / JW/NM-WN-LF) protein is Large ribosomal subunit protein bL33.